A 538-amino-acid polypeptide reads, in one-letter code: Eukaryotic translation initiation factor 3 subunit L (538 aa).

Positions Thr305–His513 constitute a PCI domain.

It belongs to the eIF-3 subunit L family. Component of the eukaryotic translation initiation factor 3 (eIF-3) complex. The eIF-3 complex interacts with pix.

Its subcellular location is the cytoplasm. Its function is as follows. Component of the eukaryotic translation initiation factor 3 (eIF-3) complex, which is involved in protein synthesis of a specialized repertoire of mRNAs and, together with other initiation factors, stimulates binding of mRNA and methionyl-tRNAi to the 40S ribosome. The eIF-3 complex specifically targets and initiates translation of a subset of mRNAs involved in cell proliferation. The sequence is that of Eukaryotic translation initiation factor 3 subunit L from Drosophila mojavensis (Fruit fly).